Reading from the N-terminus, the 149-residue chain is Cytochrome c oxidase subunit 5A, mitochondrial (149 aa).

This sequence belongs to the cytochrome c oxidase subunit 5A family. In terms of assembly, component of the cytochrome c oxidase (complex IV, CIV), a multisubunit enzyme composed of a catalytic core of 3 subunits and several supernumerary subunits. The complex exists as a monomer or a dimer and forms supercomplexes (SCs) in the inner mitochondrial membrane with ubiquinol-cytochrome c oxidoreductase (cytochrome b-c1 complex, complex III, CIII).

The protein resides in the mitochondrion inner membrane. Its pathway is energy metabolism; oxidative phosphorylation. Component of the cytochrome c oxidase, the last enzyme in the mitochondrial electron transport chain which drives oxidative phosphorylation. The respiratory chain contains 3 multisubunit complexes succinate dehydrogenase (complex II, CII), ubiquinol-cytochrome c oxidoreductase (cytochrome b-c1 complex, complex III, CIII) and cytochrome c oxidase (complex IV, CIV), that cooperate to transfer electrons derived from NADH and succinate to molecular oxygen, creating an electrochemical gradient over the inner membrane that drives transmembrane transport and the ATP synthase. Cytochrome c oxidase is the component of the respiratory chain that catalyzes the reduction of oxygen to water. Electrons originating from reduced cytochrome c in the intermembrane space (IMS) are transferred via the dinuclear copper A center (CU(A)) of subunit 2 and heme A of subunit 1 to the active site in subunit 1, a binuclear center (BNC) formed by heme A3 and copper B (CU(B)). The BNC reduces molecular oxygen to 2 water molecules using 4 electrons from cytochrome c in the IMS and 4 protons from the mitochondrial matrix. The polypeptide is Cytochrome c oxidase subunit 5A, mitochondrial (Drosophila melanogaster (Fruit fly)).